The following is a 486-amino-acid chain: Cobyric acid synthase (486 aa).

In terms of domain architecture, GATase cobBQ-type spans 248–439 (MLRVVVPVLP…VHGLFDTPAA (192 aa)). The Nucleophile role is filled by Cys-329. His-431 is a catalytic residue.

This sequence belongs to the CobB/CobQ family. CobQ subfamily.

The protein operates within cofactor biosynthesis; adenosylcobalamin biosynthesis. In terms of biological role, catalyzes amidations at positions B, D, E, and G on adenosylcobyrinic A,C-diamide. NH(2) groups are provided by glutamine, and one molecule of ATP is hydrogenolyzed for each amidation. This is Cobyric acid synthase from Paraburkholderia phytofirmans (strain DSM 17436 / LMG 22146 / PsJN) (Burkholderia phytofirmans).